The sequence spans 597 residues: Elongation factor 4 (597 aa).

Residues 2–184 (QHIRNFSIIA…AVISRIPPPK (183 aa)) form the tr-type G domain. Residues 14 to 19 (DHGKST) and 131 to 134 (NKID) each bind GTP.

Belongs to the TRAFAC class translation factor GTPase superfamily. Classic translation factor GTPase family. LepA subfamily.

Its subcellular location is the cell inner membrane. The enzyme catalyses GTP + H2O = GDP + phosphate + H(+). Functionally, required for accurate and efficient protein synthesis under certain stress conditions. May act as a fidelity factor of the translation reaction, by catalyzing a one-codon backward translocation of tRNAs on improperly translocated ribosomes. Back-translocation proceeds from a post-translocation (POST) complex to a pre-translocation (PRE) complex, thus giving elongation factor G a second chance to translocate the tRNAs correctly. Binds to ribosomes in a GTP-dependent manner. This chain is Elongation factor 4, found in Nitrosospira multiformis (strain ATCC 25196 / NCIMB 11849 / C 71).